Reading from the N-terminus, the 222-residue chain is Histidine biosynthesis bifunctional protein HisIE (222 aa).

The phosphoribosyl-AMP cyclohydrolase stretch occupies residues 1–128 (MQPLSPAFID…SLTLPPPMDA (128 aa)). Residues 129–222 (CSELFRVIDQ…ANRRGAPRRN (94 aa)) are phosphoribosyl-ATP pyrophosphohydrolase.

The protein in the N-terminal section; belongs to the PRA-CH family. It in the C-terminal section; belongs to the PRA-PH family.

It is found in the cytoplasm. The enzyme catalyses 1-(5-phospho-beta-D-ribosyl)-ATP + H2O = 1-(5-phospho-beta-D-ribosyl)-5'-AMP + diphosphate + H(+). It catalyses the reaction 1-(5-phospho-beta-D-ribosyl)-5'-AMP + H2O = 1-(5-phospho-beta-D-ribosyl)-5-[(5-phospho-beta-D-ribosylamino)methylideneamino]imidazole-4-carboxamide. The protein operates within amino-acid biosynthesis; L-histidine biosynthesis; L-histidine from 5-phospho-alpha-D-ribose 1-diphosphate: step 2/9. It functions in the pathway amino-acid biosynthesis; L-histidine biosynthesis; L-histidine from 5-phospho-alpha-D-ribose 1-diphosphate: step 3/9. In Prochlorococcus marinus (strain MIT 9313), this protein is Histidine biosynthesis bifunctional protein HisIE.